A 488-amino-acid polypeptide reads, in one-letter code: Ribulose bisphosphate carboxylase large chain (488 aa).

Substrate is bound by residues asparagine 127 and threonine 177. Lysine 179 (proton acceptor) is an active-site residue. Lysine 181 contributes to the substrate binding site. 3 residues coordinate Mg(2+): lysine 205, aspartate 207, and glutamate 208. At lysine 205 the chain carries N6-carboxylysine. The active-site Proton acceptor is histidine 297. Substrate contacts are provided by arginine 298, histidine 330, and serine 382.

This sequence belongs to the RuBisCO large chain family. Type I subfamily. As to quaternary structure, heterohexadecamer of 8 large chains and 8 small chains. Mg(2+) serves as cofactor.

It localises to the plastid. The protein resides in the chloroplast. It catalyses the reaction 2 (2R)-3-phosphoglycerate + 2 H(+) = D-ribulose 1,5-bisphosphate + CO2 + H2O. The enzyme catalyses D-ribulose 1,5-bisphosphate + O2 = 2-phosphoglycolate + (2R)-3-phosphoglycerate + 2 H(+). RuBisCO catalyzes two reactions: the carboxylation of D-ribulose 1,5-bisphosphate, the primary event in carbon dioxide fixation, as well as the oxidative fragmentation of the pentose substrate in the photorespiration process. Both reactions occur simultaneously and in competition at the same active site. This is Ribulose bisphosphate carboxylase large chain from Cyanidium caldarium (Red alga).